The chain runs to 208 residues: Guanylate kinase (208 aa).

Positions 4–182 constitute a Guanylate kinase-like domain; the sequence is GQLYIISAPS…ALEELKSVFR (179 aa). 11-18 contacts ATP; the sequence is APSGAGKT.

The protein belongs to the guanylate kinase family.

It localises to the cytoplasm. The catalysed reaction is GMP + ATP = GDP + ADP. Essential for recycling GMP and indirectly, cGMP. The polypeptide is Guanylate kinase (Hahella chejuensis (strain KCTC 2396)).